The primary structure comprises 469 residues: Ribulose bisphosphate carboxylase large chain (469 aa).

Position 8 is an N6,N6,N6-trimethyllysine (lysine 8). Substrate is bound by residues asparagine 117 and threonine 167. Lysine 169 acts as the Proton acceptor in catalysis. Lysine 171 serves as a coordination point for substrate. Residues lysine 195, aspartate 197, and glutamate 198 each contribute to the Mg(2+) site. N6-carboxylysine is present on lysine 195. Catalysis depends on histidine 288, which acts as the Proton acceptor. Residues arginine 289, histidine 321, and serine 373 each coordinate substrate.

Belongs to the RuBisCO large chain family. Type I subfamily. In terms of assembly, heterohexadecamer of 8 large chains and 8 small chains; disulfide-linked. The disulfide link is formed within the large subunit homodimers. Requires Mg(2+) as cofactor. In terms of processing, the disulfide bond which can form in the large chain dimeric partners within the hexadecamer appears to be associated with oxidative stress and protein turnover.

The protein resides in the plastid. Its subcellular location is the chloroplast. The enzyme catalyses 2 (2R)-3-phosphoglycerate + 2 H(+) = D-ribulose 1,5-bisphosphate + CO2 + H2O. The catalysed reaction is D-ribulose 1,5-bisphosphate + O2 = 2-phosphoglycolate + (2R)-3-phosphoglycerate + 2 H(+). In terms of biological role, ruBisCO catalyzes two reactions: the carboxylation of D-ribulose 1,5-bisphosphate, the primary event in carbon dioxide fixation, as well as the oxidative fragmentation of the pentose substrate in the photorespiration process. Both reactions occur simultaneously and in competition at the same active site. This is Ribulose bisphosphate carboxylase large chain from Akania bidwillii (Turnipwood).